Reading from the N-terminus, the 59-residue chain is MAKTIKITQTRSAIGRLPKHKATLLGLGLRRIGHTVEREDTPAVRGMINAVSYMVKVEE.

This sequence belongs to the universal ribosomal protein uL30 family. Part of the 50S ribosomal subunit.

This Edwardsiella ictaluri (strain 93-146) protein is Large ribosomal subunit protein uL30.